We begin with the raw amino-acid sequence, 227 residues long: Urease accessory protein UreG (227 aa).

Over residues 1–10 (MHLDHAHTHD) the composition is skewed to basic and acidic residues. The segment at 1 to 22 (MHLDHAHTHDGPSAVSADAHRP) is disordered. 35–42 (GPVGSGKT) is a binding site for GTP.

Belongs to the SIMIBI class G3E GTPase family. UreG subfamily. Homodimer. UreD, UreF and UreG form a complex that acts as a GTP-hydrolysis-dependent molecular chaperone, activating the urease apoprotein by helping to assemble the nickel containing metallocenter of UreC. The UreE protein probably delivers the nickel.

Its subcellular location is the cytoplasm. Facilitates the functional incorporation of the urease nickel metallocenter. This process requires GTP hydrolysis, probably effectuated by UreG. The chain is Urease accessory protein UreG from Streptomyces avermitilis (strain ATCC 31267 / DSM 46492 / JCM 5070 / NBRC 14893 / NCIMB 12804 / NRRL 8165 / MA-4680).